A 631-amino-acid polypeptide reads, in one-letter code: Anthrax toxin receptor-like (631 aa).

A signal peptide spans 1–27 (MGSHESLGPYFLVFLLLLLLPPPLFRA). The Extracellular segment spans residues 28–353 (GSLRYHGPDW…TSTTCGIFRN (326 aa)). Residues 76-246 (DLYFILDKSG…KALRSTIDAL (171 aa)) enclose the VWFA domain. The a divalent metal cation site is built by Ser84, Ser86, and Thr150. A helical membrane pass occupies residues 354-374 (WLYFVPLLLLVPLLLCCVWRL). Residues 375 to 631 (CRKQTVKEPP…LSLPPSEPNF (257 aa)) are Cytoplasmic-facing. The disordered stretch occupies residues 382-413 (EPPPVQKPEKEPEQEKPPSPPPPPPPPPPPLP). The segment covering 388 to 397 (KPEKEPEQEK) has biased composition (basic and acidic residues). Pro residues predominate over residues 398-413 (PPSPPPPPPPPPPPLP).

Belongs to the ATR family.

Its subcellular location is the membrane. This chain is Anthrax toxin receptor-like (ANTXRL), found in Homo sapiens (Human).